The chain runs to 173 residues: MANPAQPPLQDPGSTSPLELPEMEKLLTKVENKDDQALNLSKSLSGALDLEQNGHSLPFKVISEGHRQPSLSGSPSRVSSRRASSVITTSYAQDQEAPKDYLVLAIASCFCPVWPLNLIPLIFSIMSRSSVQQGDLDGARRLGRLARLLSITFIILGIVIIIVAVTVNFTVPK.

A compositionally biased stretch (pro residues) spans 1 to 10 (MANPAQPPLQ). The segment at 1-20 (MANPAQPPLQDPGSTSPLEL) is disordered. At 1 to 102 (MANPAQPPLQ…QDQEAPKDYL (102 aa)) the chain is on the cytoplasmic side. Phosphoserine occurs at positions 16, 43, 45, 70, 84, and 85. The segment at residues 103 to 123 (VLAIASCFCPVWPLNLIPLIF) is an intramembrane region (helical). The Cytoplasmic segment spans residues 124–150 (SIMSRSSVQQGDLDGARRLGRLARLLS). The helical transmembrane segment at 151-171 (ITFIILGIVIIIVAVTVNFTV) threads the bilayer. The Extracellular portion of the chain corresponds to 172-173 (PK).

This sequence belongs to the CD225/Dispanin family. As to quaternary structure, interacts with SLC2A4; the interaction is required for proper SLC2A4 reacycling after insulin stimulation. Expressed specifically in white and brown adipose tissues.

The protein resides in the cell membrane. It is found in the endomembrane system. The protein localises to the cytoplasm. It localises to the perinuclear region. In terms of biological role, regulates insulin-mediated adipose tissue glucose uptake and transport by modulation of SLC2A4 recycling. Not required for SLC2A4 membrane fusion upon an initial stimulus, but rather is necessary for proper protein recycling during prolonged insulin stimulation. This is Trafficking regulator of GLUT4 1 (Trarg1) from Mus musculus (Mouse).